Consider the following 507-residue polypeptide: Cytochrome P450 4A14 (507 aa).

A propeptide spans 1–4 (MGFS) (removed in mature form). Heme is bound at residue Glu-318. Residue Ser-437 is modified to Phosphoserine. Cys-454 is a binding site for heme.

Belongs to the cytochrome P450 family. It depends on heme as a cofactor.

It localises to the endoplasmic reticulum membrane. The protein resides in the microsome membrane. The enzyme catalyses an omega-methyl-long-chain fatty acid + reduced [NADPH--hemoprotein reductase] + O2 = an omega-hydroxy-long-chain fatty acid + oxidized [NADPH--hemoprotein reductase] + H2O + H(+). The catalysed reaction is dodecanoate + reduced [NADPH--hemoprotein reductase] + O2 = (11R)-hydroxydodecanoate + oxidized [NADPH--hemoprotein reductase] + H2O + H(+). It catalyses the reaction dodecanoate + reduced [NADPH--hemoprotein reductase] + O2 = 12-hydroxydodecanoate + oxidized [NADPH--hemoprotein reductase] + H2O + H(+). It carries out the reaction tetradecanoate + reduced [NADPH--hemoprotein reductase] + O2 = 14-hydroxytetradecanoate + oxidized [NADPH--hemoprotein reductase] + H2O + H(+). The protein operates within lipid metabolism; fatty acid metabolism. A cytochrome P450 monooxygenase that catalyzes omega and omega-1 hydroxylation of saturated fatty acids. Exhibits preferential omega versus omega-1 regioselectivity and (R) versus (S) stereoselectivity for hydroxylation of dodecanoic (lauric) acid. Mechanistically, uses molecular oxygen inserting one oxygen atom into a substrate, and reducing the second into a water molecule, with two electrons provided by NADPH via cytochrome P450 reductase (CPR; NADPH-ferrihemoprotein reductase). The sequence is that of Cytochrome P450 4A14 from Rattus norvegicus (Rat).